Reading from the N-terminus, the 366-residue chain is Alanine racemase (366 aa).

Catalysis depends on Lys40, which acts as the Proton acceptor; specific for D-alanine. Position 40 is an N6-(pyridoxal phosphate)lysine (Lys40). A substrate-binding site is contributed by Arg136. Residue Tyr263 is the Proton acceptor; specific for L-alanine of the active site. Position 310 (Met310) interacts with substrate.

It belongs to the alanine racemase family. The cofactor is pyridoxal 5'-phosphate.

The catalysed reaction is L-alanine = D-alanine. It participates in amino-acid biosynthesis; D-alanine biosynthesis; D-alanine from L-alanine: step 1/1. In terms of biological role, catalyzes the interconversion of L-alanine and D-alanine. May also act on other amino acids. In Streptococcus pyogenes serotype M28 (strain MGAS6180), this protein is Alanine racemase (alr).